The primary structure comprises 147 residues: TRAF-interacting protein with FHA domain-containing protein B (147 aa).

The FHA domain occupies 36 to 108 (LLVGRGQDTH…LHSVNRISFS (73 aa)).

Interacts with TIFA.

Functionally, inhibits TIFA-mediated TRAF6 activation possibly by inducing a conformational change in TIFA. This chain is TRAF-interacting protein with FHA domain-containing protein B, found in Rattus norvegicus (Rat).